Here is a 246-residue protein sequence, read N- to C-terminus: MSQTSQTRFIPHSPSPPVEWRIEPGLTPYEKALAFMEQRADAIRAGTAGEMVWLVEHPPLYTAGTSASPGDLLDPNRLPVYQTGRGGEYTYHGPGQRVAYVMLDLKRRREDVRAFVTALEDWIIASLARFNIRGERRQGRVGVWVARPEKSPLPDGTIMEDKIAAIGIRLRRWVSFHGIAVNVEPELAHFSGIVPCGISGFGVTSLVDLGLPVTMADFDVALKEAFEEVFGAAEPLFETDSLKRSA.

Positions 46–234 (GTAGEMVWLV…AFEEVFGAAE (189 aa)) constitute a BPL/LPL catalytic domain. Substrate contacts are provided by residues 85–92 (RGGEYTYH), 165–167 (AIG), and 178–180 (GIA). The active-site Acyl-thioester intermediate is cysteine 196.

Belongs to the LipB family.

Its subcellular location is the cytoplasm. The enzyme catalyses octanoyl-[ACP] + L-lysyl-[protein] = N(6)-octanoyl-L-lysyl-[protein] + holo-[ACP] + H(+). The protein operates within protein modification; protein lipoylation via endogenous pathway; protein N(6)-(lipoyl)lysine from octanoyl-[acyl-carrier-protein]: step 1/2. Functionally, catalyzes the transfer of endogenously produced octanoic acid from octanoyl-acyl-carrier-protein onto the lipoyl domains of lipoate-dependent enzymes. Lipoyl-ACP can also act as a substrate although octanoyl-ACP is likely to be the physiological substrate. The chain is Octanoyltransferase from Chelativorans sp. (strain BNC1).